The following is a 102-amino-acid chain: NADH-quinone oxidoreductase subunit K (102 aa).

The next 3 helical transmembrane spans lie at 6 to 26, 30 to 50, and 63 to 83; these read LTGF…GVLA, ILFQ…AFIA, and MFVL…ALFL.

This sequence belongs to the complex I subunit 4L family. As to quaternary structure, NDH-1 is composed of 14 different subunits. Subunits NuoA, H, J, K, L, M, N constitute the membrane sector of the complex.

Its subcellular location is the cell inner membrane. It carries out the reaction a quinone + NADH + 5 H(+)(in) = a quinol + NAD(+) + 4 H(+)(out). In terms of biological role, NDH-1 shuttles electrons from NADH, via FMN and iron-sulfur (Fe-S) centers, to quinones in the respiratory chain. The immediate electron acceptor for the enzyme in this species is believed to be ubiquinone. Couples the redox reaction to proton translocation (for every two electrons transferred, four hydrogen ions are translocated across the cytoplasmic membrane), and thus conserves the redox energy in a proton gradient. The protein is NADH-quinone oxidoreductase subunit K of Rhodopseudomonas palustris (strain BisA53).